Reading from the N-terminus, the 621-residue chain is DEAD-box ATP-dependent RNA helicase 39 (621 aa).

Positions 112-140 (ENFQELGLSEEVMGALQELNIEVPTEIQC) match the Q motif motif. Positions 143 to 330 (IPAVMERKSV…DEEFQGIEHL (188 aa)) constitute a Helicase ATP-binding domain. 156 to 163 (SHTGSGKT) provides a ligand contact to ATP. The short motif at 270–273 (DEAD) is the DEAD box element. The region spanning 355 to 505 (KLEALLQVLE…LESLTTDNVR (151 aa)) is the Helicase C-terminal domain. Residues 497 to 621 (ESLTTDNVRR…RGKSSSARAS (125 aa)) are disordered. A compositionally biased stretch (basic and acidic residues) spans 503-537 (NVRRDAARTHITQEKGRSVKQIREVSKQRNSRDKP). Residues 555 to 572 (KSSSSSFSKPRKASSPPE) are compositionally biased toward low complexity.

This sequence belongs to the DEAD box helicase family.

It carries out the reaction ATP + H2O = ADP + phosphate + H(+). This Arabidopsis thaliana (Mouse-ear cress) protein is DEAD-box ATP-dependent RNA helicase 39 (RH39).